Reading from the N-terminus, the 63-residue chain is Large ribosomal subunit protein bL28 (63 aa).

This sequence belongs to the bacterial ribosomal protein bL28 family.

The protein is Large ribosomal subunit protein bL28 of Kosmotoga olearia (strain ATCC BAA-1733 / DSM 21960 / TBF 19.5.1).